Consider the following 424-residue polypeptide: Isoflavipucine cluster transcription factor ATEG_00326 (424 aa).

Residues 10–38 (CDRCHGQKLRCIHSGGGPCVRCAKAKATC) constitute a DNA-binding region (zn(2)-C6 fungal-type). The disordered stretch occupies residues 265 to 286 (ARMQTPEGTPERTSESSPSGPP).

The protein localises to the nucleus. Transcription factor that regulates the expression of the gene cluster that mediates the biosynthesis of isoflavipucine. This Aspergillus terreus (strain NIH 2624 / FGSC A1156) protein is Isoflavipucine cluster transcription factor ATEG_00326.